Here is a 165-residue protein sequence, read N- to C-terminus: Phosphopantetheine adenylyltransferase (165 aa).

Substrate is bound at residue Ser10. ATP is bound by residues 10–11 (SF) and His18. Substrate is bound by residues Lys42, Leu74, and Arg88. Residues 89–91 (GLR), Glu99, and 124–130 (YSYLSSS) contribute to the ATP site.

The protein belongs to the bacterial CoaD family. In terms of assembly, homohexamer. Mg(2+) serves as cofactor.

It localises to the cytoplasm. It carries out the reaction (R)-4'-phosphopantetheine + ATP + H(+) = 3'-dephospho-CoA + diphosphate. Its pathway is cofactor biosynthesis; coenzyme A biosynthesis; CoA from (R)-pantothenate: step 4/5. Reversibly transfers an adenylyl group from ATP to 4'-phosphopantetheine, yielding dephospho-CoA (dPCoA) and pyrophosphate. The protein is Phosphopantetheine adenylyltransferase of Halalkalibacterium halodurans (strain ATCC BAA-125 / DSM 18197 / FERM 7344 / JCM 9153 / C-125) (Bacillus halodurans).